Here is a 180-residue protein sequence, read N- to C-terminus: Ribosome-recycling factor (180 aa).

Belongs to the RRF family.

Its subcellular location is the cytoplasm. Responsible for the release of ribosomes from messenger RNA at the termination of protein biosynthesis. May increase the efficiency of translation by recycling ribosomes from one round of translation to another. This Chlamydia abortus (strain DSM 27085 / S26/3) (Chlamydophila abortus) protein is Ribosome-recycling factor.